Reading from the N-terminus, the 59-residue chain is MAVPKRKTSKSKRDMRRASNSKFVAPGYVKCPQCHETKLPHRVCPDCGHYNGKEVIAAE.

The segment covering 1–15 (MAVPKRKTSKSKRDM) has biased composition (basic residues). Residues 1-21 (MAVPKRKTSKSKRDMRRASNS) form a disordered region.

It belongs to the bacterial ribosomal protein bL32 family.

This is Large ribosomal subunit protein bL32 from Alkaliphilus metalliredigens (strain QYMF).